Consider the following 563-residue polypeptide: 2-isopropylmalate synthase (563 aa).

A Pyruvate carboxyltransferase domain is found at 31–305 (PIWMSTDLRD…DPGLDFAQIN (275 aa)). Positions 40, 244, 246, and 280 each coordinate Mg(2+). The regulatory domain stretch occupies residues 437–563 (RAEPIEYLSH…EWARLCGGAE (127 aa)).

This sequence belongs to the alpha-IPM synthase/homocitrate synthase family. LeuA type 2 subfamily. In terms of assembly, homodimer. Mg(2+) is required as a cofactor.

Its subcellular location is the cytoplasm. The catalysed reaction is 3-methyl-2-oxobutanoate + acetyl-CoA + H2O = (2S)-2-isopropylmalate + CoA + H(+). It functions in the pathway amino-acid biosynthesis; L-leucine biosynthesis; L-leucine from 3-methyl-2-oxobutanoate: step 1/4. Functionally, catalyzes the condensation of the acetyl group of acetyl-CoA with 3-methyl-2-oxobutanoate (2-ketoisovalerate) to form 3-carboxy-3-hydroxy-4-methylpentanoate (2-isopropylmalate). The sequence is that of 2-isopropylmalate synthase from Parvibaculum lavamentivorans (strain DS-1 / DSM 13023 / NCIMB 13966).